The following is a 329-amino-acid chain: 4-methyl-2-oxopentanoate reductase A (329 aa).

Residues 162 to 163 (GI), 240 to 242 (TAR), and D266 contribute to the NAD(+) site. R242 is a catalytic residue. The active site involves E271. Catalysis depends on H289, which acts as the Proton donor.

This sequence belongs to the D-isomer specific 2-hydroxyacid dehydrogenase family.

It catalyses the reaction (2R)-hydroxy-4-methylpentanoate + NADP(+) = 4-methyl-2-oxopentanoate + NADPH + H(+). The enzyme catalyses a (2R)-2-hydroxycarboxylate + NADP(+) = a 2-oxocarboxylate + NADPH + H(+). Functionally, 4-methyl-2-oxopentanoate (MOA) reductase that reduces MOA, a possible intermediate in leucine synthesis, to D-leucate in a NADPH- or NADH-dependent manner, but with a preference for NADPH. In addition to MOA, shows broad substrate specificity toward 2-keto acids. The sequence is that of 4-methyl-2-oxopentanoate reductase A from Aspergillus oryzae (strain ATCC 42149 / RIB 40) (Yellow koji mold).